We begin with the raw amino-acid sequence, 61 residues long: Cytotoxin 3 (61 aa).

Cystine bridges form between cysteine 3-cysteine 22, cysteine 15-cysteine 39, cysteine 43-cysteine 54, and cysteine 55-cysteine 60.

It belongs to the three-finger toxin family. Short-chain subfamily. Type IB cytotoxin sub-subfamily. In terms of tissue distribution, expressed by the venom gland.

The protein localises to the secreted. This protein lyses red blood cells and has cardiotoxic and hypotensive activities. The chain is Cytotoxin 3 from Hemachatus haemachatus (Rinkhals).